Reading from the N-terminus, the 337-residue chain is Probable tyrosine--tRNA ligase, cytoplasmic (337 aa).

Tyr-35 contributes to the L-tyrosine binding site. Residues 40-48 carry the 'HIGH' region motif; sequence ITGKPHIAY. Residues Tyr-162, Gln-166, Asp-169, and Gln-184 each contribute to the L-tyrosine site. Residues 218 to 222 carry the 'KMSKS' region motif; that stretch reads KMSSS.

This sequence belongs to the class-I aminoacyl-tRNA synthetase family. Homodimer.

It localises to the cytoplasm. The enzyme catalyses tRNA(Tyr) + L-tyrosine + ATP = L-tyrosyl-tRNA(Tyr) + AMP + diphosphate + H(+). This Encephalitozoon cuniculi (strain GB-M1) (Microsporidian parasite) protein is Probable tyrosine--tRNA ligase, cytoplasmic.